Consider the following 690-residue polypeptide: Protein arginine N-methyltransferase 7 (690 aa).

SAM-dependent MTase PRMT-type domains lie at 5–355 (FQDS…FSLW) and 364–690 (KEPL…EEEQ).

This sequence belongs to the class I-like SAM-binding methyltransferase superfamily. Protein arginine N-methyltransferase family. PRMT7 subfamily.

In terms of biological role, essential arginine methyltransferase that can both catalyze the formation of omega-N monomethylarginine (MMA) and symmetrical dimethylarginine (sDMA). Specifically mediates the symmetrical dimethylation of arginine residues in the small nuclear ribonucleoproteins SmD1 and SmD3. This is Protein arginine N-methyltransferase 7 (Art7) from Anopheles gambiae (African malaria mosquito).